Consider the following 211-residue polypeptide: Transcription factor bHLH150 (211 aa).

The span at 1-15 (MSSEQGNGSNPSTSP) shows a compositional bias: polar residues. The tract at residues 1–23 (MSSEQGNGSNPSTSPEVEGTKTI) is disordered. The bHLH domain maps to 135–184 (AIRGSGGSGRRRKLSAVGNRVRVLGGLVPGCRRTALPELLDETADYIAAL).

In terms of assembly, homodimer. Interacts with PRE3 and ASK7. In terms of processing, phosphorylated by ASK7.

The protein resides in the nucleus. Atypical bHLH transcription factor probably unable to bind DNA. Negatively regulates brassinosteroid signaling. The sequence is that of Transcription factor bHLH150 (BHLH150) from Arabidopsis thaliana (Mouse-ear cress).